Reading from the N-terminus, the 537-residue chain is Extracellular exo-inulinase (537 aa).

The first 19 residues, 1–19 (MAPLSKALSVFMLMGITYA), serve as a signal peptide directing secretion. Residues Asn-40 and Asp-41 each coordinate beta-D-fructose. Residue Asp-41 is the Nucleophile of the active site. The N-linked (GlcNAc...) asparagine glycan is linked to Asn-49. Beta-D-fructose-binding residues include Gln-57 and Trp-65. The N-linked (GlcNAc...) asparagine glycan is linked to Asn-67. Ser-103 provides a ligand contact to beta-D-fructose. 2 N-linked (GlcNAc...) asparagine glycosylation sites follow: Asn-111 and Asn-112. The beta-D-fructose site is built by Arg-188, Asp-189, and Glu-241. Residue Glu-241 is the Proton donor/acceptor of the active site. 2 N-linked (GlcNAc...) asparagine glycosylation sites follow: Asn-254 and Asn-300. Trp-335 provides a ligand contact to beta-D-fructose. N-linked (GlcNAc...) asparagine glycans are attached at residues Asn-398 and Asn-430.

The protein belongs to the glycosyl hydrolase 32 family.

The protein localises to the secreted. The catalysed reaction is Hydrolysis of terminal, non-reducing (2-&gt;1)- and (2-&gt;6)-linked beta-D-fructofuranose residues in fructans.. Its function is as follows. Exo-inulinase involved in utilization of the plant storage polymer inulin, consisting of fructooligosaccharides with a degree of polymerization (DP) value from 2 to 60. Splits off terminal fructose units successively from the non-reducing end of the inulin molecule, and also hydrolyzes levan, stachyose and raffinose. Hydrolyzes both beta-2,1- as well as beta-2,6-fructosyl linkages in fructooligosaccharides. The chain is Extracellular exo-inulinase from Aspergillus awamori (Black koji mold).